A 208-amino-acid polypeptide reads, in one-letter code: MPGRERRDGGRSADDNQKKNDRRGGRRDDRRNQQQDERSQYIERVVTINRVSKVVKGGRRFSFTALVIVGDGKGMVGVGYGKAKEVPAAIQKGAEEARKNFFRVPMVAGTITHPVQGEAAAGIVMMRPAAPGTGVIAGGAARPVLECAGVQDILCKSLGSDNAINVVHATVAGLKQLNRPEEVAARRGKTLEEVAPARMLRARAGQEA.

The interval 1-38 (MPGRERRDGGRSADDNQKKNDRRGGRRDDRRNQQQDER) is disordered. The 64-residue stretch at 41–104 (YIERVVTINR…EEARKNFFRV (64 aa)) folds into the S5 DRBM domain.

It belongs to the universal ribosomal protein uS5 family. Part of the 30S ribosomal subunit. Contacts proteins S4 and S8.

Functionally, with S4 and S12 plays an important role in translational accuracy. In terms of biological role, located at the back of the 30S subunit body where it stabilizes the conformation of the head with respect to the body. This Corynebacterium diphtheriae (strain ATCC 700971 / NCTC 13129 / Biotype gravis) protein is Small ribosomal subunit protein uS5.